Here is a 160-residue protein sequence, read N- to C-terminus: 6,7-dimethyl-8-ribityllumazine synthase (160 aa).

Residues Trp-27, 59–61 (AIE), and 81–83 (VVI) contribute to the 5-amino-6-(D-ribitylamino)uracil site. 86–87 (DT) provides a ligand contact to (2S)-2-hydroxy-3-oxobutyl phosphate. His-89 serves as the catalytic Proton donor. Asn-114 contributes to the 5-amino-6-(D-ribitylamino)uracil binding site. (2S)-2-hydroxy-3-oxobutyl phosphate is bound at residue Arg-128.

This sequence belongs to the DMRL synthase family. In terms of assembly, homopentamer.

It catalyses the reaction (2S)-2-hydroxy-3-oxobutyl phosphate + 5-amino-6-(D-ribitylamino)uracil = 6,7-dimethyl-8-(1-D-ribityl)lumazine + phosphate + 2 H2O + H(+). The protein operates within cofactor biosynthesis; riboflavin biosynthesis; riboflavin from 2-hydroxy-3-oxobutyl phosphate and 5-amino-6-(D-ribitylamino)uracil: step 1/2. Catalyzes the formation of 6,7-dimethyl-8-ribityllumazine by condensation of 5-amino-6-(D-ribitylamino)uracil with 3,4-dihydroxy-2-butanone 4-phosphate. This is the penultimate step in the biosynthesis of riboflavin. The chain is 6,7-dimethyl-8-ribityllumazine synthase from Mycobacterium leprae (strain Br4923).